The sequence spans 176 residues: Large ribosomal subunit protein uL6 (176 aa).

Belongs to the universal ribosomal protein uL6 family. As to quaternary structure, part of the 50S ribosomal subunit.

Functionally, this protein binds to the 23S rRNA, and is important in its secondary structure. It is located near the subunit interface in the base of the L7/L12 stalk, and near the tRNA binding site of the peptidyltransferase center. This Methanothrix thermoacetophila (strain DSM 6194 / JCM 14653 / NBRC 101360 / PT) (Methanosaeta thermophila) protein is Large ribosomal subunit protein uL6.